Here is a 140-residue protein sequence, read N- to C-terminus: Nucleoside diphosphate kinase (140 aa).

Positions 11, 59, 87, 93, 104, and 114 each coordinate ATP. Residue His117 is the Pros-phosphohistidine intermediate of the active site.

Belongs to the NDK family. Homotetramer. Mg(2+) is required as a cofactor.

The protein resides in the cytoplasm. It catalyses the reaction a 2'-deoxyribonucleoside 5'-diphosphate + ATP = a 2'-deoxyribonucleoside 5'-triphosphate + ADP. It carries out the reaction a ribonucleoside 5'-diphosphate + ATP = a ribonucleoside 5'-triphosphate + ADP. In terms of biological role, major role in the synthesis of nucleoside triphosphates other than ATP. The ATP gamma phosphate is transferred to the NDP beta phosphate via a ping-pong mechanism, using a phosphorylated active-site intermediate. In Francisella philomiragia subsp. philomiragia (strain ATCC 25017 / CCUG 19701 / FSC 153 / O#319-036), this protein is Nucleoside diphosphate kinase.